The primary structure comprises 327 residues: Flotillin-like protein FloA (327 aa).

Residues 7 to 27 form a helical membrane-spanning segment; the sequence is FLVPILIVILLLVFFSLVPVG.

The protein belongs to the flotillin-like FloA family. As to quaternary structure, homooligomerizes.

It is found in the cell membrane. The protein localises to the membrane raft. Functionally, found in functional membrane microdomains (FMM) that may be equivalent to eukaryotic membrane rafts. FMMs are highly dynamic and increase in number as cells age. Flotillins are thought to be important factors in membrane fluidity. This is Flotillin-like protein FloA from Finegoldia magna (strain ATCC 29328 / DSM 20472 / WAL 2508) (Peptostreptococcus magnus).